Here is a 109-residue protein sequence, read N- to C-terminus: Cell division protein ZapA (109 aa).

The stretch at 22–99 forms a coiled coil; it reads EQQDALNLAA…IEQALLEQGR (78 aa).

Belongs to the ZapA family. Type 1 subfamily. As to quaternary structure, homodimer. Interacts with FtsZ.

It is found in the cytoplasm. Functionally, activator of cell division through the inhibition of FtsZ GTPase activity, therefore promoting FtsZ assembly into bundles of protofilaments necessary for the formation of the division Z ring. It is recruited early at mid-cell but it is not essential for cell division. The chain is Cell division protein ZapA from Erwinia tasmaniensis (strain DSM 17950 / CFBP 7177 / CIP 109463 / NCPPB 4357 / Et1/99).